An 85-amino-acid polypeptide reads, in one-letter code: Small ribosomal subunit protein uS17 (85 aa).

Belongs to the universal ribosomal protein uS17 family. As to quaternary structure, part of the 30S ribosomal subunit.

One of the primary rRNA binding proteins, it binds specifically to the 5'-end of 16S ribosomal RNA. This Ruminiclostridium cellulolyticum (strain ATCC 35319 / DSM 5812 / JCM 6584 / H10) (Clostridium cellulolyticum) protein is Small ribosomal subunit protein uS17.